The following is a 204-amino-acid chain: Urease accessory protein UreG (204 aa).

A GTP-binding site is contributed by 15–22 (GPVGSGKT).

The protein belongs to the SIMIBI class G3E GTPase family. UreG subfamily. As to quaternary structure, homodimer. UreD, UreF and UreG form a complex that acts as a GTP-hydrolysis-dependent molecular chaperone, activating the urease apoprotein by helping to assemble the nickel containing metallocenter of UreC. The UreE protein probably delivers the nickel.

The protein resides in the cytoplasm. In terms of biological role, facilitates the functional incorporation of the urease nickel metallocenter. This process requires GTP hydrolysis, probably effectuated by UreG. The chain is Urease accessory protein UreG from Methylobacterium nodulans (strain LMG 21967 / CNCM I-2342 / ORS 2060).